The following is a 100-amino-acid chain: Large ribosomal subunit protein bL28 (100 aa).

This sequence belongs to the bacterial ribosomal protein bL28 family.

This Ehrlichia ruminantium (strain Welgevonden) protein is Large ribosomal subunit protein bL28.